The primary structure comprises 276 residues: Type II pantothenate kinase (276 aa).

Aspartate 8–lysine 15 is a binding site for ATP. Residue glutamate 76 is the Proton acceptor of the active site. ATP-binding positions include threonine 105, glycine 127–methionine 131, phenylalanine 143, and serine 230.

This sequence belongs to the type II pantothenate kinase family. As to quaternary structure, homodimer.

Its subcellular location is the cytoplasm. The catalysed reaction is (R)-pantothenate + ATP = (R)-4'-phosphopantothenate + ADP + H(+). Its pathway is cofactor biosynthesis; coenzyme A biosynthesis; CoA from (R)-pantothenate: step 1/5. Its function is as follows. Catalyzes the phosphorylation of pantothenate (Pan), the first step in CoA biosynthesis. In Bacillus cereus (strain ZK / E33L), this protein is Type II pantothenate kinase.